The chain runs to 637 residues: Serine/threonine-protein kinase Nek11 (637 aa).

Positions 29–287 constitute a Protein kinase domain; it reads YVLQQKLGSG…AIEILKIPYI (259 aa). ATP is bound by residues 35–43 and lysine 61; that span reads LGSGSFGTV. The Proton acceptor role is filled by aspartate 158. Position 273 is a phosphoserine; by CHEK1 (serine 273). The stretch at 302 to 385 forms a coiled coil; sequence TLEDKNLDCQ…QELRSRNFQQ (84 aa). Positions 399–446 are disordered; that stretch reads GMEEKEEQPEGRPSCSPQDEDEERWQDREEEFDEPTLENLSEPQPIPS. Over residues 416–434 the composition is skewed to acidic residues; that stretch reads QDEDEERWQDREEEFDEPT.

It belongs to the protein kinase superfamily. NEK Ser/Thr protein kinase family. NIMA subfamily. Interacts with NEK2. The cofactor is Mn(2+). Mg(2+) is required as a cofactor. Phosphorylated by NEK2. Phosphorylation at Ser-273 is important for its activation.

The protein resides in the nucleus. Its subcellular location is the nucleolus. It catalyses the reaction L-seryl-[protein] + ATP = O-phospho-L-seryl-[protein] + ADP + H(+). The catalysed reaction is L-threonyl-[protein] + ATP = O-phospho-L-threonyl-[protein] + ADP + H(+). With respect to regulation, autorepressed by intramolecular binding of the C-terminus which dissociates following phosphorylation by NEK2. Activated in response to DNA damage. Inhibited by zinc. In terms of biological role, protein kinase which plays an important role in the G2/M checkpoint response to DNA damage. Controls degradation of CDC25A by directly phosphorylating it on residues whose phosphorylation is required for BTRC-mediated polyubiquitination and degradation. This chain is Serine/threonine-protein kinase Nek11 (NEK11), found in Macaca fascicularis (Crab-eating macaque).